The following is a 275-amino-acid chain: Nitrogenase iron protein 1 (275 aa).

9-16 is a binding site for ATP; sequence GKGGIGKS. Cys97 contacts [4Fe-4S] cluster. Arg100 bears the ADP-ribosylarginine; by dinitrogenase reductase ADP-ribosyltransferase mark. [4Fe-4S] cluster is bound at residue Cys132.

It belongs to the NifH/BchL/ChlL family. In terms of assembly, homodimer. The cofactor is [4Fe-4S] cluster. In terms of processing, the reversible ADP-ribosylation of Arg-100 inactivates the nitrogenase reductase and regulates nitrogenase activity.

It carries out the reaction N2 + 8 reduced [2Fe-2S]-[ferredoxin] + 16 ATP + 16 H2O = H2 + 8 oxidized [2Fe-2S]-[ferredoxin] + 2 NH4(+) + 16 ADP + 16 phosphate + 6 H(+). In terms of biological role, the key enzymatic reactions in nitrogen fixation are catalyzed by the nitrogenase complex, which has 2 components: the iron protein and the molybdenum-iron protein. This is Nitrogenase iron protein 1 (nifH1) from Methanosarcina barkeri.